A 310-amino-acid chain; its full sequence is Vomeronasal type-1 receptor 93 (310 aa).

The Extracellular portion of the chain corresponds to 1–20; sequence MNKDNTLHVDTIMKITMFSE. Residues 21–41 form a helical membrane-spanning segment; the sequence is VSVGILANSILFFAHLCMLLG. Residues 42-59 lie on the Cytoplasmic side of the membrane; it reads ENKPKPIHLYIASLSLTQ. A helical membrane pass occupies residues 60 to 80; the sequence is LMLLITMGLIAADMFISQGIW. Over 81–93 the chain is Extracellular; sequence DSTSCQSLIYLHR. Cysteines 85 and 172 form a disulfide. The helical transmembrane segment at 94 to 114 threads the bilayer; the sequence is LSRGFTLSAACLLNVFWMITL. Over 115–134 the chain is Cytoplasmic; sequence SSKKSRLTKFKHNSPHHISG. The chain crosses the membrane as a helical span at residues 135–155; it reads AFLLLCVLYMCFSSHLILSII. The Extracellular portion of the chain corresponds to 156–193; it reads ATPNLTSDNFMYVTKSCSFLPMCYSRTSMFSTTIAVRE. The N-linked (GlcNAc...) asparagine glycan is linked to Asn-159. Residues 194–214 form a helical membrane-spanning segment; sequence AFFIGLMALSSGYLVAFLWRH. At 215-238 the chain is on the cytoplasmic side; sequence RKQAQHLHSTGLSSKASPEQRATE. A helical transmembrane segment spans residues 239-259; that stretch reads TILLLMSFFVVLYILENVVFY. Residues 260 to 269 lie on the Extracellular side of the membrane; sequence SRMKFKDGST. The chain crosses the membrane as a helical span at residues 270–290; that stretch reads FYCVQIIVSHSYATVSSFVFI. At 291–310 the chain is on the cytoplasmic side; that stretch reads FTEKRMTKILRSVCTRIINI.

Belongs to the G-protein coupled receptor 1 family. Expressed in 1-4% of neurons of the vomeronasal organ. Only one pheromone receptor gene may be expressed in a particular neuron. Not expressed in the main olfactory epithelium.

Its subcellular location is the cell membrane. Functionally, putative pheromone receptor implicated in the regulation of social as well as reproductive behavior. In Rattus norvegicus (Rat), this protein is Vomeronasal type-1 receptor 93 (Vom1r93).